The chain runs to 763 residues: Autophagy-related protein 18f (763 aa).

WD repeat units follow at residues 345–385 (AHKS…STSR) and 402–441 (FTNA…EGDA). Positions 701–711 (NESIQSPSTTT) are enriched in polar residues. A disordered region spans residues 701 to 763 (NESIQSPSTT…SEDEDEEQVD (63 aa)). 2 stretches are compositionally biased toward basic and acidic residues: residues 712–725 (QDDK…HGTE) and 741–754 (PVDK…KNHS).

The protein belongs to the WD repeat PROPPIN family. Component of the PI(3,5)P2 regulatory complex at least composed of ATG18, SAC/FIG4, FAB1 and VAC14. In terms of tissue distribution, expressed in roots, flowers and leaves.

It localises to the preautophagosomal structure membrane. It is found in the vacuole membrane. The PI(3,5)P2 regulatory complex regulates both the synthesis and turnover of phosphatidylinositol 3,5-bisphosphate (PtdIns(3,5)P2). Required for autophagy. In Arabidopsis thaliana (Mouse-ear cress), this protein is Autophagy-related protein 18f (ATG18F).